A 1264-amino-acid polypeptide reads, in one-letter code: Box A-binding factor (1264 aa).

A compositionally biased stretch (basic and acidic residues) spans 1 to 11; sequence MTKTTKPKEKA. Disordered regions lie at residues 1-25, 161-200, 234-253, 405-463, 523-585, and 599-627; these read MTKT…SGLG, TASD…ESVK, LISH…QHQQ, QLHQ…HALS, NQTQ…SAAT, and HNSS…PAFQ. Residues 16–25 are compositionally biased toward gly residues; sequence AVIGSGSGLG. Low complexity predominate over residues 161–171; the sequence is TASDTAATSEA. Residues 189–198 show a composition bias toward polar residues; sequence SKAQNDASES. Basic residues predominate over residues 409-421; sequence QQHHHQQQLHHHQ. Composition is skewed to low complexity over residues 422 to 438, 447 to 459, and 523 to 554; these read QQQQ…QQQQ, STSS…PSSS, and NQTQ…QQQQ. A compositionally biased stretch (basic residues) spans 555-564; sequence QHHHNQHQHH. 2 stretches are compositionally biased toward low complexity: residues 565–585 and 599–614; these read NSSS…SAAT and HNSS…RSSH. A GATA-type zinc finger spans residues 803–827; that stretch reads CSNCHTTHTSLWRRNPAGEPVCNAC. 3 disordered regions span residues 841–867, 899–1048, and 1181–1202; these read TMKK…SKSK, DDMK…SNEN, and EEMD…QHGE. 2 stretches are compositionally biased toward low complexity: residues 909–950 and 985–1007; these read PYNS…GSTS and QMSP…HSPS. Over residues 1008-1023 the composition is skewed to polar residues; it reads TPTSIFNTPSPTHQLH. 2 stretches are compositionally biased toward low complexity: residues 1024-1048 and 1185-1200; these read NNNN…SNEN and QSQQ…QQQH. Residues Ser-1208 and Ser-1210 each carry the phosphoserine modification.

Interacts (via GATA-type Zn-finger domain) with Bfc; this interaction enhances srp binding to the promoter of crq/croquemort.

Its subcellular location is the nucleus. In terms of biological role, may function as a transcriptional activator protein and may play a key role in the organogenesis of the fat body. Binds a sequence element (5'-[TA]GATAA-3') found in the larval promoters of all known alcohol dehydrogenase (ADH) genes. Acts as a homeotic gene downstream of the terminal gap gene HKB to promote morphogenesis and differentiation of anterior and posterior midgut. Together with transcriptional cofactor Bfc directly binds the promoter of phagocytic receptor crq/croquemort to upregulate its expression and stimulate efferocytosis in response to apoptotic cells, including during embryogenesis. The polypeptide is Box A-binding factor (srp) (Drosophila melanogaster (Fruit fly)).